Here is a 146-residue protein sequence, read N- to C-terminus: Decoration protein (146 aa).

As to quaternary structure, homotrimer. Interacts with the major capsid protein.

The protein resides in the virion. In terms of biological role, cooperatively binds the expanded capsid, thereby stabilizing the mature capsid shell and allowing the large viral DNA to be packaged. Trimers of capsid decoration proteins molecules are located at local and icosahedral threefold axes and stabilize the expanded capsid, which shows increased spacing between capsomers. This is Decoration protein from Thermus thermophilus (Thermus thermophilus phage P23-45).